A 262-amino-acid chain; its full sequence is Phycoerythrobilin:ferredoxin oxidoreductase (262 aa).

The protein belongs to the HY2 family.

The enzyme catalyses (3Z)-phycoerythrobilin + oxidized 2[4Fe-4S]-[ferredoxin] = 15,16-dihydrobiliverdin + reduced 2[4Fe-4S]-[ferredoxin] + 2 H(+). Its function is as follows. Catalyzes the two-electron reduction of the C2 and C3(1) diene system of 15,16-dihydrobiliverdin. In Synechococcus sp. (strain RCC307), this protein is Phycoerythrobilin:ferredoxin oxidoreductase.